The chain runs to 366 residues: tRNA/tmRNA (uracil-C(5))-methyltransferase (366 aa).

S-adenosyl-L-methionine-binding residues include Gln-190, Tyr-218, Asn-223, Glu-239, and Asp-299. The active-site Nucleophile is Cys-324. The active-site Proton acceptor is the Glu-358.

Belongs to the class I-like SAM-binding methyltransferase superfamily. RNA M5U methyltransferase family. TrmA subfamily.

It carries out the reaction uridine(54) in tRNA + S-adenosyl-L-methionine = 5-methyluridine(54) in tRNA + S-adenosyl-L-homocysteine + H(+). The catalysed reaction is uridine(341) in tmRNA + S-adenosyl-L-methionine = 5-methyluridine(341) in tmRNA + S-adenosyl-L-homocysteine + H(+). Functionally, dual-specificity methyltransferase that catalyzes the formation of 5-methyluridine at position 54 (m5U54) in all tRNAs, and that of position 341 (m5U341) in tmRNA (transfer-mRNA). This Escherichia coli O157:H7 (strain EC4115 / EHEC) protein is tRNA/tmRNA (uracil-C(5))-methyltransferase.